A 292-amino-acid chain; its full sequence is Ribosomal RNA small subunit methyltransferase A (292 aa).

S-adenosyl-L-methionine is bound by residues N28, L30, G55, E77, D103, and N123.

It belongs to the class I-like SAM-binding methyltransferase superfamily. rRNA adenine N(6)-methyltransferase family. RsmA subfamily.

It is found in the cytoplasm. It carries out the reaction adenosine(1518)/adenosine(1519) in 16S rRNA + 4 S-adenosyl-L-methionine = N(6)-dimethyladenosine(1518)/N(6)-dimethyladenosine(1519) in 16S rRNA + 4 S-adenosyl-L-homocysteine + 4 H(+). Functionally, specifically dimethylates two adjacent adenosines (A1518 and A1519) in the loop of a conserved hairpin near the 3'-end of 16S rRNA in the 30S particle. May play a critical role in biogenesis of 30S subunits. This Methylobacterium radiotolerans (strain ATCC 27329 / DSM 1819 / JCM 2831 / NBRC 15690 / NCIMB 10815 / 0-1) protein is Ribosomal RNA small subunit methyltransferase A.